We begin with the raw amino-acid sequence, 588 residues long: Succinate dehydrogenase flavoprotein subunit (588 aa).

Residues 14–19 (GAGGAG), 37–52 (SKVFPTRSHTVSAQGG), and Asp-221 contribute to the FAD site. Residue His-45 is modified to Tele-8alpha-FAD histidine. His-242 and Thr-254 together coordinate substrate. Position 267 is an N6-acetyllysine (Lys-267). Arg-286 acts as the Proton acceptor in catalysis. His-354 lines the substrate pocket. An FAD-binding site is contributed by Glu-388. Position 399 (Arg-399) interacts with substrate. 404-405 (SL) is a binding site for FAD.

Belongs to the FAD-dependent oxidoreductase 2 family. FRD/SDH subfamily. As to quaternary structure, part of an enzyme complex containing four subunits: a flavoprotein, an iron-sulfur, cytochrome b-556, and a hydrophobic anchor protein. The complex forms trimers. FAD is required as a cofactor.

It localises to the cell inner membrane. It catalyses the reaction a quinone + succinate = fumarate + a quinol. The protein operates within carbohydrate metabolism; tricarboxylic acid cycle; fumarate from succinate (bacterial route): step 1/1. Two distinct, membrane-bound, FAD-containing enzymes are responsible for the catalysis of fumarate and succinate interconversion; the fumarate reductase is used in anaerobic growth, and the succinate dehydrogenase is used in aerobic growth. The chain is Succinate dehydrogenase flavoprotein subunit (sdhA) from Escherichia coli O157:H7.